Reading from the N-terminus, the 517-residue chain is FERM domain-containing protein 5 (517 aa).

One can recognise an FERM domain in the interval 17–298 (YSCTVRLLDD…ENQAFYKLEK (282 aa)). The tract at residues 308–353 (SNLFFKGSRFRYSGRVAKEVMESSAKIKREPPEIHRAGMVPSRSCP) is interaction with ROCK1. A disordered region spans residues 344 to 367 (AGMVPSRSCPSITHGPRLSSVPRT). Position 375 is a phosphoserine (Ser-375). Disordered regions lie at residues 385–408 (DSAHSTPVRSSSHGDTFLPHVRSS) and 485–517 (GHGGSEQEQRVHLKGPQLQQQQWKGWGKSVPLD). Over residues 388 to 398 (HSTPVRSSSHG) the composition is skewed to polar residues. Residues 498–517 (KGPQLQQQQWKGWGKSVPLD) are compositionally biased toward low complexity.

As to quaternary structure, interacts with CTNND1, ITGB5 (via cytoplasmic domain) and ROCK1.

It is found in the cell junction. The protein resides in the adherens junction. Functionally, may be involved in regulation of cell migration. May regulate cell-matrix interactions via its interaction with ITGB5 and modifying ITGB5 cytoplasmic tail interactions such as with FERMT2 and TLN1. May regulate ROCK1 kinase activity possibly involved in regulation of actin stress fiber formation. This is FERM domain-containing protein 5 (Frmd5) from Mus musculus (Mouse).